The chain runs to 39 residues: Cytochrome b559 subunit beta (39 aa).

The helical transmembrane segment at 14–30 (WLAVHGLAIPTVFFLGS) threads the bilayer. H18 is a binding site for heme.

The protein belongs to the PsbE/PsbF family. Heterodimer of an alpha subunit and a beta subunit. PSII is composed of 1 copy each of membrane proteins PsbA, PsbB, PsbC, PsbD, PsbE, PsbF, PsbH, PsbI, PsbJ, PsbK, PsbL, PsbM, PsbT, PsbX, PsbY, PsbZ, Psb30/Ycf12, at least 3 peripheral proteins of the oxygen-evolving complex and a large number of cofactors. It forms dimeric complexes. The cofactor is heme b.

The protein resides in the plastid membrane. This b-type cytochrome is tightly associated with the reaction center of photosystem II (PSII). PSII is a light-driven water:plastoquinone oxidoreductase that uses light energy to abstract electrons from H(2)O, generating O(2) and a proton gradient subsequently used for ATP formation. It consists of a core antenna complex that captures photons, and an electron transfer chain that converts photonic excitation into a charge separation. This Cuscuta gronovii (Common dodder) protein is Cytochrome b559 subunit beta.